We begin with the raw amino-acid sequence, 417 residues long: NADH-quinone oxidoreductase subunit D (417 aa).

This sequence belongs to the complex I 49 kDa subunit family. In terms of assembly, NDH-1 is composed of 14 different subunits. Subunits NuoB, C, D, E, F, and G constitute the peripheral sector of the complex.

The protein localises to the cell inner membrane. The enzyme catalyses a quinone + NADH + 5 H(+)(in) = a quinol + NAD(+) + 4 H(+)(out). NDH-1 shuttles electrons from NADH, via FMN and iron-sulfur (Fe-S) centers, to quinones in the respiratory chain. The immediate electron acceptor for the enzyme in this species is believed to be ubiquinone. Couples the redox reaction to proton translocation (for every two electrons transferred, four hydrogen ions are translocated across the cytoplasmic membrane), and thus conserves the redox energy in a proton gradient. The polypeptide is NADH-quinone oxidoreductase subunit D (Legionella pneumophila (strain Corby)).